A 294-amino-acid polypeptide reads, in one-letter code: Arsenical-resistance protein ARR1 (294 aa).

A compositionally biased stretch (basic residues) spans 1 to 11 (MAKPRGRKGGR). The disordered stretch occupies residues 1 to 29 (MAKPRGRKGGRKPSLTPPKNKRAAQLRAS). The tract at residues 22-45 (RAAQLRASQNAFRKRKLERLEELE) is basic motif. The bZIP domain maps to 22-72 (RAAQLRASQNAFRKRKLERLEELEKKEAQLTVTNDQIHILKKENELLHFML). Positions 44–72 (LEKKEAQLTVTNDQIHILKKENELLHFML) are leucine-zipper. The arsenite site is built by Cys132, Cys137, and Cys274.

This sequence belongs to the bZIP family. YAP subfamily. Homodimer. In terms of processing, phosphorylation by HOG1 promotes nuclear localization in the presence of arsenic.

The protein resides in the cytoplasm. The protein localises to the nucleus. Its activity is regulated as follows. Transcriptional activity is controlled by regulated degradation by the ubiquitin-proteasome pathway in absence of arsenic. Arsenic-exposure results in stabilization and increased transcriptional activity. Functionally, transcription activator required for resistance to arsenic compounds and for a regulated expression of ACR2, ACR3 and YCF1. This Saccharomyces cerevisiae (strain ATCC 204508 / S288c) (Baker's yeast) protein is Arsenical-resistance protein ARR1.